The following is a 196-amino-acid chain: uncharacterized protein (196 aa).

Residues 22 to 42 traverse the membrane as a helical segment; the sequence is MIIIPMALLVFILIIGSFFAI.

The protein localises to the cell membrane. This is an uncharacterized protein from Lactobacillus acidophilus (strain ATCC 700396 / NCK56 / N2 / NCFM).